The sequence spans 328 residues: Carbonic anhydrase-related protein 10 (328 aa).

The 271-residue stretch at 31–301 (GWWAYKEVVQ…LNNRCIRTNI (271 aa)) folds into the Alpha-carbonic anhydrase domain.

The protein belongs to the alpha-carbonic anhydrase family.

Its function is as follows. Does not have a catalytic activity. The polypeptide is Carbonic anhydrase-related protein 10 (CA10) (Macaca fascicularis (Crab-eating macaque)).